We begin with the raw amino-acid sequence, 268 residues long: NH(3)-dependent NAD(+) synthetase (268 aa).

45-52 serves as a coordination point for ATP; it reads GLSGGIDS. Mg(2+) is bound at residue Asp51. Arg129 contacts deamido-NAD(+). Thr149 contributes to the ATP binding site. A Mg(2+)-binding site is contributed by Glu154. Lys162 and Asp169 together coordinate deamido-NAD(+). The ATP site is built by Lys178 and Thr200. 260-261 serves as a coordination point for deamido-NAD(+); the sequence is HK.

This sequence belongs to the NAD synthetase family. As to quaternary structure, homodimer.

It carries out the reaction deamido-NAD(+) + NH4(+) + ATP = AMP + diphosphate + NAD(+) + H(+). It participates in cofactor biosynthesis; NAD(+) biosynthesis; NAD(+) from deamido-NAD(+) (ammonia route): step 1/1. Catalyzes the ATP-dependent amidation of deamido-NAD to form NAD. Uses ammonia as a nitrogen source. The polypeptide is NH(3)-dependent NAD(+) synthetase (Halobacterium salinarum (strain ATCC 29341 / DSM 671 / R1)).